The following is a 435-amino-acid chain: Tol-Pal system protein TolB (435 aa).

The N-terminal stretch at 1–28 (MVKCSLIRALMVIAGLIGAAAFTTPANA) is a signal peptide. Positions 288 to 310 (STAAIDTSPSYSPDGARVSFESD) are disordered.

It belongs to the TolB family. As to quaternary structure, the Tol-Pal system is composed of five core proteins: the inner membrane proteins TolA, TolQ and TolR, the periplasmic protein TolB and the outer membrane protein Pal. They form a network linking the inner and outer membranes and the peptidoglycan layer.

It is found in the periplasm. Part of the Tol-Pal system, which plays a role in outer membrane invagination during cell division and is important for maintaining outer membrane integrity. This Rhizobium leguminosarum bv. trifolii (strain WSM2304) protein is Tol-Pal system protein TolB.